Here is a 956-residue protein sequence, read N- to C-terminus: Endogenous retrovirus group K member 8 Pol protein (956 aa).

The Reverse transcriptase domain maps to 57–245 (LEKGHIEPSF…TPFHYLGMQI (189 aa)). The short motif at 161 to 164 (LPQG) is the LPQG element. Residues 195 to 198 (YIDD) carry the YXDD motif. Positions 460–590 (LENALTVFTD…ADLLVSSALI (131 aa)) constitute an RNase H type-1 domain. Mg(2+)-binding residues include Asp-469, Glu-497, Asp-517, and Asp-582. Residues 587 to 628 (SALIKAQELHALTHVNAAGLKNKFDVTWKQAKDIVQHCTQCQ) form an Integrase-type zinc finger. 4 residues coordinate Zn(2+): His-596, His-600, Cys-624, and Cys-627. The 162-residue stretch at 642 to 803 (RGLCPNALWQ…TSAEQHLTGK (162 aa)) folds into the Integrase catalytic domain. The segment at residues 811 to 859 (KLIWWKDNKNKTWEIGKVITWGRGFACVSPGENQLPVWIPTRHLKFYNE) is a DNA-binding region (integrase-type). Residues 864 to 890 (AKKSTSAETETPQSSTVDSQDEQNGDV) form a disordered region. Over residues 869–881 (SAETETPQSSTVD) the composition is skewed to polar residues.

This sequence belongs to the beta type-B retroviral polymerase family. HERV class-II K(HML-2) pol subfamily.

The enzyme catalyses DNA(n) + a 2'-deoxyribonucleoside 5'-triphosphate = DNA(n+1) + diphosphate. The catalysed reaction is Endonucleolytic cleavage to 5'-phosphomonoester.. Functionally, early post-infection, the reverse transcriptase converts the viral RNA genome into double-stranded viral DNA. The RNase H domain of the reverse transcriptase performs two functions. It degrades the RNA template and specifically removes the RNA primer from the RNA/DNA hybrid. Following nuclear import, the integrase catalyzes the insertion of the linear, double-stranded viral DNA into the host cell chromosome. Endogenous Pol proteins may have kept, lost or modified their original function during evolution. The protein is Endogenous retrovirus group K member 8 Pol protein (ERVK-8) of Homo sapiens (Human).